The primary structure comprises 311 residues: Aspartate carbamoyltransferase catalytic subunit (311 aa).

R58 and T59 together coordinate carbamoyl phosphate. Residue K86 coordinates L-aspartate. The carbamoyl phosphate site is built by R108, H136, and Q139. 2 residues coordinate L-aspartate: R169 and R224. Residues G265 and P266 each contribute to the carbamoyl phosphate site.

It belongs to the aspartate/ornithine carbamoyltransferase superfamily. ATCase family. In terms of assembly, heterododecamer (2C3:3R2) of six catalytic PyrB chains organized as two trimers (C3), and six regulatory PyrI chains organized as three dimers (R2).

It carries out the reaction carbamoyl phosphate + L-aspartate = N-carbamoyl-L-aspartate + phosphate + H(+). The protein operates within pyrimidine metabolism; UMP biosynthesis via de novo pathway; (S)-dihydroorotate from bicarbonate: step 2/3. Functionally, catalyzes the condensation of carbamoyl phosphate and aspartate to form carbamoyl aspartate and inorganic phosphate, the committed step in the de novo pyrimidine nucleotide biosynthesis pathway. The polypeptide is Aspartate carbamoyltransferase catalytic subunit (Geobacter sulfurreducens (strain ATCC 51573 / DSM 12127 / PCA)).